A 440-amino-acid polypeptide reads, in one-letter code: Tetratricopeptide repeat protein 5 (440 aa).

TPR repeat units follow at residues 7 to 61 (EEVK…EEVV), 68 to 98 (AQVL…AVKL), 103 to 130 (VEAW…SGAL), 136 to 174 (KVSL…AVQM), and 179 to 216 (GRSW…AEKV). The Nuclear export signal signature appears at 13–24 (LQKLQELVDQLY). Phosphoserine; by ATM is present on serine 203. Residue serine 221 is modified to Phosphoserine; by CHEK2. One copy of the TPR 6 repeat lies at 224 to 253 (PDLHLNRATLHKYEESYGEALEGFSRAAAL). Residues 285–287 (KTK) form a mediates interaction with 28S rRNA of ribosome-coding tubulin region.

In terms of assembly, interacts with JMY and p300/EP300; the interaction occurs in the nucleus and augments the association between JMY and p300/EP300 in response to DNA damage. Forms a complex with HSF1 and p300/EP300; these interactions augment chromatin-bound HSF1 and p300/EP300 histone acetyltransferase activity, resulting in enhanced heat-shock-responsive transcription. Interacts with PRMT5; the interaction is DNA damage-dependent and promotes PRMT5 interaction with p53/TP53 and subsequent methylation. Interacts with JMY; the interaction occurs in the cytoplasm and results in the inhibition of JYM's nucleation activity. Interacts with ribosome-coding tubulin (via 60S subunit 28S rRNA and protein uL24/RPL26) and the N-terminal of nascent tubulin polypeptide (via alpha-tubulin MREC motif and beta-tubulin MREI motif); these interactions result in tubulin mRNA-targeted degradation. Interacts with ATP5F1B; the interaction occurs in the mitochondria and results in ATP production decrease. Interacts with p53/TP53; the interaction occurs in the mitochondria and results in increased apoptosis. In terms of processing, phosphorylation by ATM kinase induces nuclear accumulation while interfering with nuclear export, and phosphorylation by CHEK2 kinase enhances nuclear stability.

It localises to the nucleus. Its subcellular location is the cytoplasm. It is found in the cytoplasmic vesicle. The protein localises to the mitochondrion matrix. Cofactor involved in the regulation of various cellular mechanisms such as actin regulation, autophagy, chromatin regulation and DNA repair. In non-stress conditions, interacts with cofactor JMY in the cytoplasm which prevents JMY's actin nucleation activity and ability to activate the Arp2/3 complex. Acts as a negative regulator of nutrient stress-induced autophagy by preventing JMY's interaction with MAP1LC3B, thereby preventing autophagosome formation. Involves in tubulin autoregulation by promoting its degradation in response to excess soluble tubulin. To do so, associates with the active ribosome near the ribosome exit tunnel and with nascent tubulin polypeptides early during their translation, triggering tubulin mRNA-targeted degradation. Following DNA damage, phosphorylated by DNA damage responsive protein kinases ATM and CHEK2, leading to its nuclear accumulation and stability. Nuclear TTC5/STRAP promotes the assembly of a stress-responsive p53/TP53 coactivator complex, which includes the coactivators JMY and p300, thereby increasing p53/TP53-dependent transcription and apoptosis. Also recruits arginine methyltransferase PRMT5 to p53/TP53 when DNA is damaged, allowing PRMT5 to methylate p53/TP53. In DNA stress conditions, also prevents p53/TP53 degradation by E3 ubiquitin ligase MDM2. Upon heat-shock stress, forms a chromatin-associated complex with heat-shock factor 1 HSF1 and p300/EP300 to stimulate heat-shock-responsive transcription, thereby increasing cell survival. Mitochondrial TTC5/STRAP interacts with ATP synthase subunit beta ATP5F1B which decreased ATP synthase activity and lowers mitochondrial ATP production, thereby regulating cellular respiration and mitochondrial-dependent apoptosis. Mitochondrial TTC5/STRAP also regulates p53/TP53-mediated apoptosis. The protein is Tetratricopeptide repeat protein 5 of Homo sapiens (Human).